A 95-amino-acid chain; its full sequence is Large ribosomal subunit protein uL23 (95 aa).

It belongs to the universal ribosomal protein uL23 family. As to quaternary structure, part of the 50S ribosomal subunit. Contacts protein L29, and trigger factor when it is bound to the ribosome.

In terms of biological role, one of the early assembly proteins it binds 23S rRNA. One of the proteins that surrounds the polypeptide exit tunnel on the outside of the ribosome. Forms the main docking site for trigger factor binding to the ribosome. The polypeptide is Large ribosomal subunit protein uL23 (Fusobacterium nucleatum subsp. nucleatum (strain ATCC 25586 / DSM 15643 / BCRC 10681 / CIP 101130 / JCM 8532 / KCTC 2640 / LMG 13131 / VPI 4355)).